The sequence spans 113 residues: Large ribosomal subunit protein uL22 (113 aa).

The protein belongs to the universal ribosomal protein uL22 family. In terms of assembly, part of the 50S ribosomal subunit.

This protein binds specifically to 23S rRNA; its binding is stimulated by other ribosomal proteins, e.g. L4, L17, and L20. It is important during the early stages of 50S assembly. It makes multiple contacts with different domains of the 23S rRNA in the assembled 50S subunit and ribosome. In terms of biological role, the globular domain of the protein is located near the polypeptide exit tunnel on the outside of the subunit, while an extended beta-hairpin is found that lines the wall of the exit tunnel in the center of the 70S ribosome. The sequence is that of Large ribosomal subunit protein uL22 from Bacillus pumilus (strain SAFR-032).